Here is a 468-residue protein sequence, read N- to C-terminus: Glutamate--tRNA ligase (468 aa).

The 'HIGH' region signature appears at 11 to 21 (PSPTGFIHLGN). The short motif at 243 to 247 (KMSKR) is the 'KMSKS' region element. Lys246 contacts ATP.

This sequence belongs to the class-I aminoacyl-tRNA synthetase family. Glutamate--tRNA ligase type 1 subfamily. Monomer.

The protein localises to the cytoplasm. It catalyses the reaction tRNA(Glu) + L-glutamate + ATP = L-glutamyl-tRNA(Glu) + AMP + diphosphate. Its function is as follows. Catalyzes the attachment of glutamate to tRNA(Glu) in a two-step reaction: glutamate is first activated by ATP to form Glu-AMP and then transferred to the acceptor end of tRNA(Glu). In Cupriavidus pinatubonensis (strain JMP 134 / LMG 1197) (Cupriavidus necator (strain JMP 134)), this protein is Glutamate--tRNA ligase.